The following is a 564-amino-acid chain: Proline--tRNA ligase 1 (564 aa).

This sequence belongs to the class-II aminoacyl-tRNA synthetase family. ProS type 1 subfamily. As to quaternary structure, homodimer.

The protein localises to the cytoplasm. The catalysed reaction is tRNA(Pro) + L-proline + ATP = L-prolyl-tRNA(Pro) + AMP + diphosphate. In terms of biological role, catalyzes the attachment of proline to tRNA(Pro) in a two-step reaction: proline is first activated by ATP to form Pro-AMP and then transferred to the acceptor end of tRNA(Pro). As ProRS can inadvertently accommodate and process non-cognate amino acids such as alanine and cysteine, to avoid such errors it has two additional distinct editing activities against alanine. One activity is designated as 'pretransfer' editing and involves the tRNA(Pro)-independent hydrolysis of activated Ala-AMP. The other activity is designated 'posttransfer' editing and involves deacylation of mischarged Ala-tRNA(Pro). The misacylated Cys-tRNA(Pro) is not edited by ProRS. This Streptomyces avermitilis (strain ATCC 31267 / DSM 46492 / JCM 5070 / NBRC 14893 / NCIMB 12804 / NRRL 8165 / MA-4680) protein is Proline--tRNA ligase 1.